A 317-amino-acid polypeptide reads, in one-letter code: 2,3-dihydroxyphenylpropionate/2,3-dihydroxicinnamic acid 1,2-dioxygenase (317 aa).

The active-site Proton donor is His115. The Proton acceptor role is filled by His179.

It belongs to the LigB/MhpB extradiol dioxygenase family. In terms of assembly, homotetramer. Fe(2+) serves as cofactor.

The catalysed reaction is 3-(2,3-dihydroxyphenyl)propanoate + O2 = (2Z,4E)-2-hydroxy-6-oxonona-2,4-dienedioate + H(+). It carries out the reaction (2E)-3-(2,3-dihydroxyphenyl)prop-2-enoate + O2 = (2Z,4E,7E)-2-hydroxy-6-oxonona-2,4,7-trienedioate + H(+). Its pathway is aromatic compound metabolism; 3-phenylpropanoate degradation. In terms of biological role, catalyzes the non-heme iron(II)-dependent oxidative cleavage of 2,3-dihydroxyphenylpropionic acid and 2,3-dihydroxicinnamic acid into 2-hydroxy-6-ketononadienedioate and 2-hydroxy-6-ketononatrienedioate, respectively. The polypeptide is 2,3-dihydroxyphenylpropionate/2,3-dihydroxicinnamic acid 1,2-dioxygenase (Paraburkholderia phymatum (strain DSM 17167 / CIP 108236 / LMG 21445 / STM815) (Burkholderia phymatum)).